We begin with the raw amino-acid sequence, 201 residues long: Small ribosomal subunit protein uS5 (201 aa).

Positions 1–28 are disordered; it reads MARGEQQRGEGGQRRDRRDRNAPEERVD. The region spanning 31-94 is the S5 DRBM domain; that stretch reads IVEKLVHINR…EEAKKTMIRV (64 aa). The interval 173–201 is disordered; sequence QIAAKRGKKVGDILGRRADGASAPEAIEG. Positions 181–191 are enriched in basic and acidic residues; sequence KVGDILGRRAD.

Belongs to the universal ribosomal protein uS5 family. Part of the 30S ribosomal subunit. Contacts proteins S4 and S8.

Its function is as follows. With S4 and S12 plays an important role in translational accuracy. Functionally, located at the back of the 30S subunit body where it stabilizes the conformation of the head with respect to the body. The polypeptide is Small ribosomal subunit protein uS5 (Caulobacter vibrioides (strain ATCC 19089 / CIP 103742 / CB 15) (Caulobacter crescentus)).